The chain runs to 416 residues: MDVMRSVLGMVVLLTIAFLLSVNKKKISLRTVGAALVLQVVIGGIMLWLPPGRWVAEKVAFGVHKVMAYSDAGSAFIFGSLVGPKMDTLFDGAGFIFGFRVLPAIIFVTALVSILYYIGVMGILIRILGGIFQKALNISKIESFVAVTTIFLGQNEIPAIVKPFIDRLNRNELFTAICSGMASIAGSTMIGYAALGVPVEYLLAASLMAIPGGILFARLLSPATESSQVSFNNLSFTETPPKSIIEAAATGAMTGLKIAAGVATVVMAFVAIIALINGIIGGVGGWFGFEHASLESILGYLLAPLAWVMGVDWSDANLAGSLIGQKLAINEFVAYLNFSPYLQTAGTLDAKTVAIISFALCGFANFGSIGVVVGAFSAVAPHRAPEIAQLGLRALAAATLSNLMSATIAGFFIGLA.

Residues 1-2 (MD) are Periplasmic-facing. The chain crosses the membrane as a helical span at residues 3-23 (VMRSVLGMVVLLTIAFLLSVN). The Cytoplasmic segment spans residues 24-31 (KKKISLRT). A helical transmembrane segment spans residues 32-52 (VGAALVLQVVIGGIMLWLPPG). Over 53–95 (RWVAEKVAFGVHKVMAYSDAGSAFIFGSLVGPKMDTLFDGAGF) the chain is Periplasmic. Residues 96–118 (IFGFRVLPAIIFVTALVSILYYI) form a helical membrane-spanning segment. The Cytoplasmic segment spans residues 119-172 (GVMGILIRILGGIFQKALNISKIESFVAVTTIFLGQNEIPAIVKPFIDRLNRNE). A helical transmembrane segment spans residues 173-193 (LFTAICSGMASIAGSTMIGYA). At 194 to 196 (ALG) the chain is on the periplasmic side. A helical transmembrane segment spans residues 197 to 217 (VPVEYLLAASLMAIPGGILFA). The Cytoplasmic portion of the chain corresponds to 218-246 (RLLSPATESSQVSFNNLSFTETPPKSIIE). A helical transmembrane segment spans residues 247–267 (AAATGAMTGLKIAAGVATVVM). At 268–352 (AFVAIIALIN…QTAGTLDAKT (85 aa)) the chain is on the periplasmic side. A helical membrane pass occupies residues 353 to 373 (VAIISFALCGFANFGSIGVVV). Residues 374–394 (GAFSAVAPHRAPEIAQLGLRA) lie on the Cytoplasmic side of the membrane. A helical membrane pass occupies residues 395-415 (LAAATLSNLMSATIAGFFIGL). A topological domain (periplasmic) is located at residue Ala-416.

This sequence belongs to the concentrative nucleoside transporter (CNT) (TC 2.A.41) family.

The protein resides in the cell inner membrane. The polypeptide is Putative nucleoside permease NupX (nupX) (Escherichia coli (strain K12)).